A 322-amino-acid polypeptide reads, in one-letter code: Serine protease Lpg1137 (322 aa).

Residue S68 is part of the active site.

It is found in the secreted. It localises to the host mitochondrion membrane. In terms of biological role, serine protease effector that inhibits host cell autophagy by targeting SNX17. Localizes to the host endoplasmic reticulum-mitochondria contact site and catalyzes degradation of host SNX17, thereby impairing endoplasmic reticulum-mitochondria communication, leading to inhibit autophagy as well as staurosporine-induced apoptosis. The sequence is that of Serine protease Lpg1137 from Legionella pneumophila subsp. pneumophila (strain Philadelphia 1 / ATCC 33152 / DSM 7513).